The primary structure comprises 372 residues: Flagellar P-ring protein (372 aa).

Residues 1 to 26 form the signal peptide; the sequence is MNLSSLPHRLLAAAVALCAIAAPASA.

Belongs to the FlgI family. In terms of assembly, the basal body constitutes a major portion of the flagellar organelle and consists of four rings (L,P,S, and M) mounted on a central rod.

The protein resides in the periplasm. It localises to the bacterial flagellum basal body. Functionally, assembles around the rod to form the L-ring and probably protects the motor/basal body from shearing forces during rotation. The chain is Flagellar P-ring protein from Xanthomonas campestris pv. campestris (strain ATCC 33913 / DSM 3586 / NCPPB 528 / LMG 568 / P 25).